The chain runs to 305 residues: Syntaxin-112 (305 aa).

M1 is subject to N-acetylmethionine. Residues 52–119 (QEIETIKTLI…TLIETLEKRN (68 aa)) are a coiled coil. The 63-residue stretch at 210–272 (DLKTKERHEA…SGGTNSLYYA (63 aa)) folds into the t-SNARE coiled-coil homology domain.

It belongs to the syntaxin family. In terms of assembly, part of the t-SNARE complex.

Vesicle trafficking protein that functions in the secretory pathway. The protein is Syntaxin-112 (SYP112) of Arabidopsis thaliana (Mouse-ear cress).